The following is a 382-amino-acid chain: Histidinol-phosphate aminotransferase (382 aa).

Position 215 is an N6-(pyridoxal phosphate)lysine (K215). Positions 360-382 (NSNNIDNQSKTHSQTSSIRKGTI) are disordered.

The protein belongs to the class-II pyridoxal-phosphate-dependent aminotransferase family. Histidinol-phosphate aminotransferase subfamily. As to quaternary structure, homodimer. Pyridoxal 5'-phosphate serves as cofactor.

The catalysed reaction is L-histidinol phosphate + 2-oxoglutarate = 3-(imidazol-4-yl)-2-oxopropyl phosphate + L-glutamate. Its pathway is amino-acid biosynthesis; L-histidine biosynthesis; L-histidine from 5-phospho-alpha-D-ribose 1-diphosphate: step 7/9. This chain is Histidinol-phosphate aminotransferase, found in Yersinia pseudotuberculosis serotype IB (strain PB1/+).